The following is a 210-amino-acid chain: T-cell surface glycoprotein CD8 beta-2 chain (210 aa).

The first 18 residues, 1–18 (MRPRLWLLLAAQLTVLHG), serve as a signal peptide directing secretion. The Ig-like V-type domain occupies 19–132 (NSVLQQTPAY…ELTFGKGTQL (114 aa)). The Extracellular portion of the chain corresponds to 19-170 (NSVLQQTPAY…ETQKGPLCSP (152 aa)). An intrachain disulfide couples Cys41 to Cys116. Asn102 carries an N-linked (GlcNAc...) asparagine glycan. Residues 171 to 191 (VTLGLLVAGVLVLLVSLGVAM) traverse the membrane as a helical segment. The Cytoplasmic segment spans residues 192–210 (HLCCRRRRARLRFMKQFYK).

In general heterodimer of an alpha and a beta chain linked by two disulfide bonds.

Its subcellular location is the cell membrane. Identifies cytotoxic/suppressor T-cells that interact with MHC class I bearing targets. CD8 is thought to play a role in the process of T-cell mediated killing. In Homo sapiens (Human), this protein is T-cell surface glycoprotein CD8 beta-2 chain.